A 325-amino-acid polypeptide reads, in one-letter code: Replication factor C small subunit (325 aa).

An ATP-binding site is contributed by 44–51; that stretch reads GPPGTGKT.

This sequence belongs to the activator 1 small subunits family. RfcS subfamily. In terms of assembly, heteromultimer composed of small subunits (RfcS) and large subunits (RfcL).

In terms of biological role, part of the RFC clamp loader complex which loads the PCNA sliding clamp onto DNA. The protein is Replication factor C small subunit of Thermofilum pendens (strain DSM 2475 / Hrk 5).